The following is a 116-amino-acid chain: MARAQLVLVALVAALLLAAPHAAVAITCGQVNSAVGPCLTYARGGAGPSAACCSGVRSLKAAASTTADRRTACNCLKNAARGIKGLNAGNAASIPSKCGVSVPYTISASIDCSRVS.

The first 25 residues, 1–25 (MARAQLVLVALVAALLLAAPHAAVA), serve as a signal peptide directing secretion. 4 cysteine pairs are disulfide-bonded: C28/C75, C38/C52, C53/C98, and C73/C112.

Belongs to the plant LTP family. As to expression, aleurone (external part) of the seeds.

In terms of biological role, plant non-specific lipid-transfer proteins transfer phospholipids as well as galactolipids across membranes. May play a role in wax or cutin deposition in the cell walls of expanding epidermal cells and certain secretory tissues. The protein is Non-specific lipid-transfer protein 1 (LTP) of Oryza sativa subsp. indica (Rice).